The sequence spans 248 residues: Probable transcriptional regulatory protein PHZ_c3068 (248 aa).

Belongs to the TACO1 family.

The protein resides in the cytoplasm. The polypeptide is Probable transcriptional regulatory protein PHZ_c3068 (Phenylobacterium zucineum (strain HLK1)).